We begin with the raw amino-acid sequence, 783 residues long: MNPGIEKYEIRFDFDLKDFTYTSHERIHLAGDWKDIKLDAVRLSVDKVTCNGQPMRFETGQDTVTVKGSFHDKDVIDIDFHAKVSDTLMGLYLSRTKEGTMITTQFESNGARMAFPCVDHPAYKAVFAITVVIDKDYDAISNMPPKRIEVSERKIVEFQDTPKMSTYLLYIGVGKFKYATDKYRDIDLILVSLKDIKSKYPLEIARKSIEFYESYFGIPYALPKMHLISVPEFGAGAMENWGAITFREVALMATENSGSIMKQNAAITIAHEIAHQWFGDLVTMKWWNDLWLNESFATFMSYKTVDSFSKQWDVFADFIRSETGGALRSDSLKNTHPIEVDVKDPDEISQIFDEISYGKGASILRMIEDYAGYEEFRKGISKYLNDHRYGNAEGSDLWTAIEDVSGKPVKRVMEYWIKNPGYPVVSVVKSGNKFRLTQEQFFLDGTRGQGKWPIPLTVMTKSGKKAMLMEESAEIEDMVKVNVNSSGFYRVSYDGESFETVMKNYSKLSNLDRWGLISDLYAFLISGRVSVDDYLARIKGFFEDSDHLIVEEIASQLTGLYLLKPDSNRIRETAASYLSRQVVALGDKQKGEDDKISKIRGIVTQDLAMVDDHFASDLARKFSTLAEDPDLALAKSIAAAKAYGISELASAADKYTDDEIRVRIIAAMGWCSPSDLKSVFELIDKGTIRKQDMLYVFSNMPANPKGRDFFFSNIDRIVALMEHAFEGTGYTSRILETAIPYLGLARYEDVKKKAEQIRKPSYNVGINKGLETLEIVRKLYNKL.

Substrate-binding positions include E107 and 236 to 240 (GAMEN). H271 lines the Zn(2+) pocket. E272 (proton acceptor) is an active-site residue. Zn(2+) is bound by residues H275 and E294.

The protein belongs to the peptidase M1 family. In terms of assembly, monomer. Part of the Tricorn proteolytic complex. Zn(2+) serves as cofactor.

It localises to the cytoplasm. Functionally, proteases F1, F2 and F3 degrade oligopeptides produced by Tricorn (themselves probably produced by the proteasome), yielding free amino acids. In Thermoplasma acidophilum (strain ATCC 25905 / DSM 1728 / JCM 9062 / NBRC 15155 / AMRC-C165), this protein is Tricorn protease-interacting factor F2 (trf2).